The following is a 465-amino-acid chain: Mothers against decapentaplegic homolog 1 (465 aa).

M1 bears the N-acetylmethionine mark. One can recognise an MH1 domain in the interval 12 to 136 (PAVKRLLGWK…YKRVESPVLP (125 aa)). Zn(2+) contacts are provided by C64, C109, C121, and H126. Residues 162–249 (NEPHMPLNAT…QPMDTNMMAP (88 aa)) are disordered. Low complexity predominate over residues 179-210 (PNSHPFPHSPNSSYPNSPGSSSSTYPHSPTSS). Pro residues predominate over residues 221-232 (DTPPPAYLPPED). The MH2 domain occupies 271–465 (WCSIVYYELN…SPHNPISSVS (195 aa)). Phosphothreonine; by MINK1, TNIK and MAP4K4 is present on T322. The L3 loop stretch occupies residues 418-428 (KGWGAEYHRQD). Residues S463 and S465 each carry the phosphoserine modification.

It belongs to the dwarfin/SMAD family. Found in a complex with SMAD4 and YY1. Interacts with HGS, NANOG and ZCCHC12. Upon C-terminus phosphorylation: forms trimers with another SMAD1 and the co-SMAD SMAD4. Interacts with PEBP2-alpha subunit, CREB-binding protein (CBP), p300, SMURF1, SMURF2, USP15 and HOXC8. Associates with ZNF423 or ZNF521 in response to BMP2 leading to activate transcription of BMP target genes. Interacts with SKOR1. Interacts (via MH2 domain) with LEMD3. Binding to LEMD3 results in at least a partial reduction of receptor-mediated phosphorylation. Forms a ternary complex with PSMB4 and OAZ1 before PSMB4 is incorporated into the 20S proteasome. Interacts (via MH2 domain) with FAM83G (via MH2 domain); in a SMAD4-independent manner. Interacts with ZC3H3. Interacts with TMEM119. Interacts (via MH1 and MH2 domains) with ZNF8. Interacts with RANBP3L; the interaction increases when SMAD1 is not phosphorylated and mediates SMAD1 nuclear export. Interacts with EGR1; this interaction inhibits SMAD1 dephosphorylation. Interacts with SMAD6. Interacts with YAP1. Interacts with MTMR4; negatively regulates BMP signaling through SMAD1 dephosphorylation and retention in endosomes. Phosphorylation of the C-terminal SVS motif by BMP type 1 receptor kinase activates SMAD1 by promoting dissociation from the receptor and trimerization with SMAD4. Phosphorylation by ERK2 MAP kinase in response to EGF or HGF prevents SMAD1 nuclear accumulation and transcriptional activity in response to BMP. Dephosphorylation, probably by PPM1A, induces its export from the nucleus to the cytoplasm. Dephosphorylation is inhibited by association with EGR1. Phosphorylation by CDK8/9 creates binding sites for YAP1, and subsequent phosphorylation by GSK3 switches off YAP1 binding and adds binding sites for SMURF1. Post-translationally, ubiquitinated by SMAD-specific E3 ubiquitin ligase SMURF1, leading to its degradation. Monoubiquitinated, leading to prevent DNA-binding. Deubiquitination by USP15 alleviates inhibition and promotes activation of TGF-beta target genes. Dephosphorylation, probably by PPM1A, induces its export from the nucleus to the cytoplasm. Phospho-SMAD1 is ubiquitinated by CHIP leading to disruption of the SMAD1-SMAD4 complex.

It localises to the cytoplasm. It is found in the nucleus. Functionally, transcriptional modulator that plays a role in various cellular processes, including embryonic development, cell differentiation, and tissue homeostasis. Upon BMP ligand binding to their receptors at the cell surface, is phosphorylated by activated type I BMP receptors (BMPRIs) and associates with SMAD4 to form an heteromeric complex which translocates into the nucleus acting as transcription factor. In turn, the hetero-trimeric complex recognizes cis-regulatory elements containing Smad Binding Elements (SBEs) to modulate the outcome of the signaling network. SMAD1/OAZ1/PSMB4 complex mediates the degradation of the CREBBP/EP300 repressor SNIP1. Positively regulates BMP4-induced expression of odontogenic development regulator MSX1 following IPO7-mediated nuclear import. This Bos taurus (Bovine) protein is Mothers against decapentaplegic homolog 1 (SMAD1).